The primary structure comprises 463 residues: Quinolone resistance protein NorB (463 aa).

14 helical membrane passes run 17–37 (IGIV…VNVV), 53–73 (IAVS…GGLA), 86–106 (IILN…LLLI), 107–127 (IGRL…LSII), 142–162 (YWSI…GAVA), 165–185 (LGWR…LFLI), 201–221 (FDIK…ILIT), 230–250 (SLLF…FIVL), 273–293 (TASN…NTFV), 299–319 (YSSL…LIMI), 334–354 (PMLI…LTFL), 357–377 (IFYV…LGIY), 403–423 (MASA…YAIV), and 435–455 (IALW…LLLV).

The protein belongs to the major facilitator superfamily. TCR/Tet family.

The protein resides in the cell membrane. Its function is as follows. Multidrug efflux pump that acts independently of NorA and is one of the factors that confers resistance against diverse quinolones and chemical compounds. This is Quinolone resistance protein NorB (norB) from Staphylococcus aureus (strain COL).